A 150-amino-acid polypeptide reads, in one-letter code: C-type lectin 37Db (150 aa).

The first 20 residues, 1–20, serve as a signal peptide directing secretion; the sequence is MMVKLLLLFLVCWSALPLES. A C-type lectin domain is found at 31 to 148; that stretch reads IGEKQYYISL…CYSSVAFICQ (118 aa). Cystine bridges form between C52-C147 and C122-C139. N-linked (GlcNAc...) asparagine glycans are attached at residues N107 and N115.

Its subcellular location is the secreted. Functionally, galactose-specific lectin that displays calcium-dependent activity. Binds to the surface of hemocytes and enhances hemocyte encapsulation and melanization. This is likely by interacting with carbohydrates on the surface of the hemocytes. Also displays agglutination activity against the Gram-negative bacterium E.coli. The protein is C-type lectin 37Db of Drosophila melanogaster (Fruit fly).